The primary structure comprises 513 residues: ATP synthase subunit alpha (513 aa).

169-176 (GDRQTGKT) is a binding site for ATP.

The protein belongs to the ATPase alpha/beta chains family. F-type ATPases have 2 components, CF(1) - the catalytic core - and CF(0) - the membrane proton channel. CF(1) has five subunits: alpha(3), beta(3), gamma(1), delta(1), epsilon(1). CF(0) has three main subunits: a(1), b(2) and c(9-12). The alpha and beta chains form an alternating ring which encloses part of the gamma chain. CF(1) is attached to CF(0) by a central stalk formed by the gamma and epsilon chains, while a peripheral stalk is formed by the delta and b chains.

It localises to the cell inner membrane. The catalysed reaction is ATP + H2O + 4 H(+)(in) = ADP + phosphate + 5 H(+)(out). Produces ATP from ADP in the presence of a proton gradient across the membrane. The alpha chain is a regulatory subunit. This is ATP synthase subunit alpha from Nitrosomonas europaea (strain ATCC 19718 / CIP 103999 / KCTC 2705 / NBRC 14298).